The chain runs to 249 residues: Derlin-2.1 (249 aa).

At 1–21 (MAQAVEEWYRQMPIITRSYLT) the chain is on the cytoplasmic side. A helical transmembrane segment spans residues 22 to 42 (AAVVTTVGCTLEIISPYHLYL). The Lumenal segment spans residues 43–96 (NPKLVVQHYEIWRLVTNFLYFRKMDLDFLFHMFFLARYCKLLEENSFRGRTADF). A helical transmembrane segment spans residues 97–117 (FYMLLFGATVLTSIVLIGGMI). Residues 118-122 (PYISE) lie on the Cytoplasmic side of the membrane. Residues 123–143 (TFARILFLSNSLTFMMVYVWS) form a helical membrane-spanning segment. The Lumenal segment spans residues 144–152 (KHNPFIHMS). A helical membrane pass occupies residues 153 to 173 (FLGLFTFTAAYLPWVLLGFSI). Over 174 to 249 (LVGSSTWVDL…GAMGLDPQAQ (76 aa)) the chain is Cytoplasmic.

This sequence belongs to the derlin family. In terms of tissue distribution, expressed in roots, stalks, leaves, embryo and endosperm.

The protein localises to the endoplasmic reticulum membrane. In terms of biological role, may be involved in the degradation process of specific misfolded endoplasmic reticulum (ER) luminal proteins. The protein is Derlin-2.1 (DER2.1) of Zea mays (Maize).